The sequence spans 116 residues: NADH-ubiquinone oxidoreductase chain 3 (116 aa).

Transmembrane regions (helical) follow at residues 4 to 24 (LIIT…IAFW), 56 to 76 (FFLI…LLPL), and 88 to 108 (TLIL…YEWI).

Belongs to the complex I subunit 3 family. Core subunit of respiratory chain NADH dehydrogenase (Complex I) which is composed of 45 different subunits. Interacts with TMEM186. Interacts with TMEM242.

The protein resides in the mitochondrion inner membrane. The enzyme catalyses a ubiquinone + NADH + 5 H(+)(in) = a ubiquinol + NAD(+) + 4 H(+)(out). Functionally, core subunit of the mitochondrial membrane respiratory chain NADH dehydrogenase (Complex I) which catalyzes electron transfer from NADH through the respiratory chain, using ubiquinone as an electron acceptor. Essential for the catalytic activity of complex I. In Osphranter robustus (Wallaroo), this protein is NADH-ubiquinone oxidoreductase chain 3.